The following is a 136-amino-acid chain: ATP synthase epsilon chain (136 aa).

The protein belongs to the ATPase epsilon chain family. In terms of assembly, F-type ATPases have 2 components, CF(1) - the catalytic core - and CF(0) - the membrane proton channel. CF(1) has five subunits: alpha(3), beta(3), gamma(1), delta(1), epsilon(1). CF(0) has three main subunits: a, b and c.

It localises to the cell membrane. In terms of biological role, produces ATP from ADP in the presence of a proton gradient across the membrane. The sequence is that of ATP synthase epsilon chain from Macrococcus caseolyticus (strain JCSC5402) (Macrococcoides caseolyticum).